A 354-amino-acid polypeptide reads, in one-letter code: Cellular communication network factor 6 (354 aa).

The N-terminal stretch at 1 to 23 is a signal peptide; the sequence is MQGLLFSTLLLAGLAQFCCRVQG. One can recognise an IGFBP N-terminal domain in the interval 44–117; it reads RKQFCHWPCK…RYETGVCAYL (74 aa). 6 disulfides stabilise this stretch: Cys48-Cys72, Cys52-Cys74, Cys54-Cys75, Cys61-Cys78, Cys86-Cys100, and Cys92-Cys114. Asn178 is a glycosylation site (N-linked (GlcNAc...) asparagine). The 46-residue stretch at 208–253 folds into the TSP type-1 domain; that stretch reads KCLVQATKWTPCSRTCGMGISNRVTNENSNCEMRKEKRLCYIQPCD. Cystine bridges form between Cys268–Cys305, Cys285–Cys319, Cys296–Cys335, Cys299–Cys337, and Cys304–Cys341. Residues 268 to 342 enclose the CTCK domain; that stretch reads CQPTFQLSKA…TSCVCQRNCR (75 aa). Asn308 is a glycosylation site (N-linked (GlcNAc...) asparagine).

Belongs to the CCN family. In terms of tissue distribution, predominant expression in adult kidney and testis and fetal kidney. Weaker expression found in placenta, ovary, prostate and small intestine. Also expressed in skeletally-derived cells such as synoviocytes and articular cartilage chondrocytes.

Its subcellular location is the secreted. The protein localises to the mitochondrion. Its function is as follows. Plays a role in mitochondrial electron transport and mitochondrial respiration. Through its regulation of the mitochondrial function may play a role in normal postnatal skeletal growth and cartilage homeostasis. The sequence is that of Cellular communication network factor 6 from Homo sapiens (Human).